The primary structure comprises 295 residues: Small ribosomal subunit protein uS2 (295 aa).

The protein belongs to the universal ribosomal protein uS2 family. In terms of assembly, component of the small ribosomal subunit. Mature ribosomes consist of a small (40S) and a large (60S) subunit. The 40S subunit contains about 33 different proteins and 1 molecule of RNA (18S). The 60S subunit contains about 49 different proteins and 3 molecules of RNA (25S, 5.8S and 5S). Interacts with RPS21.

The protein resides in the cytoplasm. In terms of biological role, required for the assembly and/or stability of the 40S ribosomal subunit. Required for the processing of the 20S rRNA-precursor to mature 18S rRNA in a late step of the maturation of 40S ribosomal subunits. The sequence is that of Small ribosomal subunit protein uS2 from Paracoccidioides brasiliensis (strain Pb18).